The primary structure comprises 396 residues: DnaJ homolog subfamily A member 1 (396 aa).

Residues 6 to 68 enclose the J domain; that stretch reads TYYDVLGVKP…KKRELYDKGG (63 aa). N6-acetyllysine is present on Lys66. Ser83 carries the post-translational modification Phosphoserine. Residues 120–204 form a CR-type zinc finger; sequence GATRKLALQK…CNGRKIVREK (85 aa). Zn(2+) contacts are provided by Cys133, Cys136, Cys149, Cys152, Cys176, Cys179, Cys192, and Cys195. CXXCXGXG motif repeat units follow at residues 133-140, 149-156, 176-183, and 192-199; these read CDKCEGRG, CPNCRGTG, CMECQGHG, and CKSCNGRK. Ser334 carries the phosphoserine modification. The tract at residues 351–396 is disordered; it reads VEETDEMDQVELVDFDPNQERRRHYNGEAYEDDEHHPRGGVQCQTS. A compositionally biased stretch (acidic residues) spans 352–364; that stretch reads EETDEMDQVELVD. Tyr380 is modified (phosphotyrosine). A Cysteine methyl ester modification is found at Cys393. Cys393 is lipidated: S-farnesyl cysteine. Residues 394–396 constitute a propeptide, removed in mature form; the sequence is QTS.

As to quaternary structure, identified in a complex with HSPA1B and BAX. Interacts with RNF207.

It is found in the membrane. It localises to the cytoplasm. The protein resides in the microsome. The protein localises to the mitochondrion. Its subcellular location is the nucleus. It is found in the perinuclear region. Co-chaperone for HSPA8/Hsc70. Plays a role in protein transport into mitochondria via its role as co-chaperone. Functions as co-chaperone for HSPA1B and negatively regulates the translocation of BAX from the cytosol to mitochondria in response to cellular stress, thereby protecting cells against apoptosis. Stimulates ATP hydrolysis, but not the folding of unfolded proteins mediated by HSPA1A (in vitro). Promotes apoptosis in response to cellular stress mediated by exposure to anisomycin or UV. This is DnaJ homolog subfamily A member 1 (DNAJA1) from Pongo abelii (Sumatran orangutan).